The primary structure comprises 426 residues: PI-PLC X domain-containing protein At5g67130 (426 aa).

The N-terminal stretch at 1 to 28 is a signal peptide; the sequence is MSACINGLCRAVTVSLLLLLLSFSFSSA. In terms of domain architecture, PI-PLC X-box spans 76–232; the sequence is IINGLPFNKY…MVQENHRLLV (157 aa). N-linked (GlcNAc...) asparagine glycans are attached at residues Asn-151 and Asn-255. Residues 258 to 277 form a disordered region; it reads GDPGVKRGSCPNRKESQPLN. N-linked (GlcNAc...) asparagine glycosylation occurs at Asn-370. A lipid anchor (GPI-anchor amidated serine) is attached at Ser-404. Positions 405-426 are cleaved as a propeptide — removed in mature form; sequence VAQLNNIVVFCFSLLPLLIFLL.

It localises to the cell membrane. The polypeptide is PI-PLC X domain-containing protein At5g67130 (Arabidopsis thaliana (Mouse-ear cress)).